The primary structure comprises 468 residues: Bone morphogenetic protein 3 (468 aa).

Residues 1–22 (MAGARGLLCLWLGYFCLNLAQG) form the signal peptide. The propeptide occupies 23 to 358 (QRPNLHLPGL…EQTLKKARRK (336 aa)). Positions 29–53 (LPGLRETEPSDRATGGSPSPDLRPH) are disordered. Residues Asn115, Asn139, Asn171, and Asn216 are each glycosylated (N-linked (GlcNAc...) asparagine). Residues 314 to 349 (RKPYKSLQTQPPEKSRNKKKQRKGSHQKGQTLQFDE) are disordered. Positions 329-339 (RNKKKQRKGSH) are enriched in basic residues. A compositionally biased stretch (polar residues) spans 340-349 (QKGQTLQFDE). Intrachain disulfides connect Cys366/Cys433, Cys395/Cys465, and Cys399/Cys467. Asn459 carries N-linked (GlcNAc...) asparagine glycosylation.

The protein belongs to the TGF-beta family. Homodimer; disulfide-linked.

The protein resides in the secreted. Its function is as follows. Negatively regulates bone density. Antagonizes the ability of certain osteogenic BMPs to induce osteoprogenitor differentiation and ossification. In Mus musculus (Mouse), this protein is Bone morphogenetic protein 3 (Bmp3).